The primary structure comprises 572 residues: Urease subunit alpha (572 aa).

Positions 136 to 572 constitute a Urease domain; that stretch reads GGIDTHIHWI…VPLAQRYFLF (437 aa). 3 residues coordinate Ni(2+): H141, H143, and K224. An N6-carboxylysine modification is found at K224. H226 contacts substrate. Positions 253 and 279 each coordinate Ni(2+). H327 (proton donor) is an active-site residue. D367 is a Ni(2+) binding site.

Belongs to the metallo-dependent hydrolases superfamily. Urease alpha subunit family. Heterotrimer of UreA (gamma), UreB (beta) and UreC (alpha) subunits. Three heterotrimers associate to form the active enzyme. Ni cation is required as a cofactor. Carboxylation allows a single lysine to coordinate two nickel ions.

Its subcellular location is the cytoplasm. It catalyses the reaction urea + 2 H2O + H(+) = hydrogencarbonate + 2 NH4(+). Its pathway is nitrogen metabolism; urea degradation; CO(2) and NH(3) from urea (urease route): step 1/1. The chain is Urease subunit alpha from Actinobacillus pleuropneumoniae (Haemophilus pleuropneumoniae).